The following is a 636-amino-acid chain: Polyadenylate-binding protein 1 (636 aa).

Methionine 1 carries the post-translational modification N-acetylmethionine. RRM domains follow at residues alanine 11–arginine 89, glycine 99–serine 175, threonine 191–lysine 268, and valine 294–arginine 370. The UNR-binding stretch occupies residues arginine 166–threonine 289. At lysine 299 the chain carries N6-methyllysine. Serine 315 is modified (phosphoserine). Threonine 319 bears the Phosphothreonine mark. Residues arginine 385, arginine 419, arginine 432, and arginine 436 each carry the omega-N-methylarginine modification. Omega-N-methylated arginine; by CARM1 is present on residues arginine 455 and arginine 460. An omega-N-methylarginine mark is found at arginine 475 and arginine 481. At arginine 493 the chain carries Asymmetric dimethylarginine; alternate. At arginine 493 the chain carries Dimethylated arginine; alternate. Residue arginine 493 is modified to Omega-N-methylarginine; alternate. Arginine 506 bears the Omega-N-methylarginine mark. Lysine 512 is modified (N6-acetyllysine). Arginine 518 carries the omega-N-methylarginine modification. The region spanning glutamine 542–alanine 619 is the PABC domain.

Belongs to the polyadenylate-binding protein type-1 family. As to quaternary structure, may form homodimers. Component of a multisubunit autoregulatory ribonucleoprotein complex (ARC), at least composed of IGF2BP1, PABPC1 and CSDE1. Directly interacts with IGF2BP1. Part of a complex associated with the FOS mCRD domain and consisting of HNRPD, SYNCRIP, PAIP1 and CSDE1/UNR. Interacts with PAIP1 and PAIP2 (via the PABPC1-interacting motifs PAM1 and PAM2). Interacts with PAIP1 with a 1:1 stoichiometry and with PAIP2 with a 1:2 stoichiometry. The interaction with CSDE1 is direct and RNA-independent. Found in a mRNP complex with YBX2. Interacts with TENT2/GLD2. Identified in the spliceosome C complex. Identified in a mRNP complex, at least composed of DHX9, DDX3X, ELAVL1, HNRNPU, IGF2BP1, ILF3, PABPC1, PCBP2, PTBP2, STAU1, STAU2, SYNCRIP and YBX1. The interaction with DDX3X is direct and RNA-independent. This interaction increases in stressed cells and decreases during cell recovery. Identified in a IGF2BP1-dependent mRNP granule complex containing untranslated mRNAs. Interacts with NXF1/TAP. Interacts with PIWIL1. Interacts with AGO1, AGO2, GSPT1 and GSPT2. Interacts with LARP4B. Interacts (via the second and third RRM domains and the C-terminus) with PAIP2B (via central acidic portion and C-terminus). Forms a complex with LARP1 and SHFL. Interacts with LARP4. Interacts with ZFC3H1 in a RNase-sensitive manner. Interacts with TRIM71 (via NHL repeats) in an RNA-dependent manner. Interacts with TENT5C; the interaction has no effect on TENT5C poly(A) polymerase function. Interacts with G3BP1 and G3BP2. Interacts with ENDOV; the interaction is RNA-dependent and stimulates ENDOV activity. Interacts with UPF1; the interaction is RNA-dependent. Interacts with IGF2BP2 and IGF2BP3. May interact with SETX. Interacts with RBM46. Interacts with PAN3 isoform 1/Pan3L and isoform 3/Pan3S (via N-terminus); interaction with isoform 1 is less efficient than with isoform 3. Phosphorylated by MAPKAPK2. In terms of processing, methylated by CARM1. Arg-493 is dimethylated, probably to asymmetric dimethylarginine.

Its subcellular location is the cytoplasm. The protein resides in the stress granule. It localises to the nucleus. The protein localises to the cell projection. It is found in the lamellipodium. Its function is as follows. Binds the poly(A) tail of mRNA, including that of its own transcript, and regulates processes of mRNA metabolism such as pre-mRNA splicing and mRNA stability. Its function in translational initiation regulation can either be enhanced by PAIP1 or repressed by PAIP2. Can probably bind to cytoplasmic RNA sequences other than poly(A) in vivo. Binds to N6-methyladenosine (m6A)-containing mRNAs and contributes to MYC stability by binding to m6A-containing MYC mRNAs. Involved in translationally coupled mRNA turnover. Implicated with other RNA-binding proteins in the cytoplasmic deadenylation/translational and decay interplay of the FOS mRNA mediated by the major coding-region determinant of instability (mCRD) domain. Involved in regulation of nonsense-mediated decay (NMD) of mRNAs containing premature stop codons; for the recognition of premature termination codons (PTC) and initiation of NMD a competitive interaction between UPF1 and PABPC1 with the ribosome-bound release factors is proposed. By binding to long poly(A) tails, may protect them from uridylation by ZCCHC6/ZCCHC11 and hence contribute to mRNA stability. In Rattus norvegicus (Rat), this protein is Polyadenylate-binding protein 1 (Pabpc1).